We begin with the raw amino-acid sequence, 342 residues long: Protein RecA (342 aa).

65 to 72 (GPESSGKT) provides a ligand contact to ATP.

It belongs to the RecA family.

The protein localises to the cytoplasm. In terms of biological role, can catalyze the hydrolysis of ATP in the presence of single-stranded DNA, the ATP-dependent uptake of single-stranded DNA by duplex DNA, and the ATP-dependent hybridization of homologous single-stranded DNAs. It interacts with LexA causing its activation and leading to its autocatalytic cleavage. The polypeptide is Protein RecA (Teredinibacter turnerae (strain ATCC 39867 / T7901)).